Consider the following 297-residue polypeptide: Small ribosomal subunit protein uS2 (297 aa).

Low complexity predominate over residues 263-289 (AAPTSWEADGGDWAASSAAPAGESWAE). Residues 263 to 297 (AAPTSWEADGGDWAASSAAPAGESWAETQPAEAKW) are disordered.

Belongs to the universal ribosomal protein uS2 family. As to quaternary structure, component of the small ribosomal subunit. Mature ribosomes consist of a small (40S) and a large (60S) subunit. The 40S subunit contains about 33 different proteins and 1 molecule of RNA (18S). The 60S subunit contains about 49 different proteins and 3 molecules of RNA (25S, 5.8S and 5S). Interacts with rps21.

It localises to the cytoplasm. Functionally, required for the assembly and/or stability of the 40S ribosomal subunit. Required for the processing of the 20S rRNA-precursor to mature 18S rRNA in a late step of the maturation of 40S ribosomal subunits. This chain is Small ribosomal subunit protein uS2 (rps0), found in Neosartorya fischeri (strain ATCC 1020 / DSM 3700 / CBS 544.65 / FGSC A1164 / JCM 1740 / NRRL 181 / WB 181) (Aspergillus fischerianus).